Consider the following 203-residue polypeptide: Octanoyltransferase (203 aa).

One can recognise a BPL/LPL catalytic domain in the interval 30–203 (EDQDNYFFIT…HIIKEGRKLV (174 aa)). Substrate-binding positions include 69–76 (RGGSVTFH), 135–137 (SVG), and 148–150 (GIS). Cys-166 serves as the catalytic Acyl-thioester intermediate.

It belongs to the LipB family.

The protein resides in the cytoplasm. The enzyme catalyses octanoyl-[ACP] + L-lysyl-[protein] = N(6)-octanoyl-L-lysyl-[protein] + holo-[ACP] + H(+). It functions in the pathway protein modification; protein lipoylation via endogenous pathway; protein N(6)-(lipoyl)lysine from octanoyl-[acyl-carrier-protein]: step 1/2. Catalyzes the transfer of endogenously produced octanoic acid from octanoyl-acyl-carrier-protein onto the lipoyl domains of lipoate-dependent enzymes. Lipoyl-ACP can also act as a substrate although octanoyl-ACP is likely to be the physiological substrate. In Persephonella marina (strain DSM 14350 / EX-H1), this protein is Octanoyltransferase.